The primary structure comprises 269 residues: Interleukin-1 beta (269 aa).

Positions 1–117 (MATVPELNCE…DDDDNLLVCD (117 aa)) are excised as a propeptide.

It belongs to the IL-1 family. Monomer. Interacts with MEFV. Interacts with integrins ITGAV:ITGBV and ITGA5:ITGB1; integrin-binding is required for IL1B signaling. Interacts with cargo receptor TMED10; the interaction is direct and is required for the secretion of IL1B mature form. Interacts with HSP90AB1; the interaction facilitates cargo translocation into the ERGIC. Interacts with HSP90B1; the interaction facilitates cargo translocation into the ERGIC. Expressed in activated macrophages (at protein level).

It localises to the cytoplasm. It is found in the cytosol. Its subcellular location is the secreted. The protein localises to the lysosome. The protein resides in the extracellular exosome. Functionally, potent pro-inflammatory cytokine. Initially discovered as the major endogenous pyrogen, induces prostaglandin synthesis, neutrophil influx and activation, T-cell activation and cytokine production, B-cell activation and antibody production, and fibroblast proliferation and collagen production. Promotes Th17 differentiation of T-cells. Synergizes with IL12/interleukin-12 to induce IFNG synthesis from T-helper 1 (Th1) cells. Plays a role in angiogenesis by inducing VEGF production synergistically with TNF and IL6. Involved in transduction of inflammation downstream of pyroptosis: its mature form is specifically released in the extracellular milieu by passing through the gasdermin-D (GSDMD) pore. In Mus musculus (Mouse), this protein is Interleukin-1 beta (Il1b).